Consider the following 570-residue polypeptide: Peptidyl-prolyl cis-trans isomerase CYP63 (570 aa).

The PPIase cyclophilin-type domain occupies 10–174; sequence FLDVSIGGDP…SPVKIIDCGE (165 aa). Residues 180-570 are disordered; sequence AHDAAEREKG…GKRGLVSYAD (391 aa). A compositionally biased stretch (basic and acidic residues) spans 203 to 219; that stretch reads VSDREAKETRKKESNEK. 2 stretches are compositionally biased toward low complexity: residues 229–238 and 246–259; these read SSDSYSSSSD and EAYSSSSYESSSSS. The span at 262-292 shows a compositional bias: basic residues; the sequence is KHRKRKSTTRHKGRRGERKSKGRSGKKKARP. The span at 297–309 shows a compositional bias: low complexity; that stretch reads STNSSSDTESSSS. The span at 323–339 shows a compositional bias: basic and acidic residues; it reads VKVDNADQHANLDDSVK. Ser-340 is modified (phosphoserine). Residues 340–351 are compositionally biased toward basic residues; the sequence is SRSRSPIRRRNQ. The segment covering 352–365 has biased composition (low complexity); it reads NSRSKSPSRSPVRV. 2 stretches are compositionally biased toward basic and acidic residues: residues 387–397 and 437–467; these read SPREKPTEETV and SPPRHWPDRRNFQDRNRDRYPSNRSYSERSP. Residues 468–490 show a composition bias toward basic residues; sequence RGRFRSPPRRRSPPRYNRRRRST. Residues 495–505 show a composition bias toward basic and acidic residues; sequence DGYRRRLRDGS. A compositionally biased stretch (basic residues) spans 509–523; the sequence is SPRHRSRSQSPRKRQ. The span at 546-555 shows a compositional bias: low complexity; that stretch reads SPAESLSPSH.

The protein belongs to the cyclophilin-type PPIase family. In terms of assembly, interacts with SNRNP35, RNU1, SCL28, SCL30, SR30 and SR34. The binding to SR34 is phosphorylation-dependent. As to expression, ubiquitous.

The protein resides in the nucleus. It localises to the nucleoplasm. The protein localises to the nucleus speckle. The catalysed reaction is [protein]-peptidylproline (omega=180) = [protein]-peptidylproline (omega=0). In terms of biological role, PPIases accelerate the folding of proteins. It catalyzes the cis-trans isomerization of proline imidic peptide bonds in oligopeptides. May be implicated in the folding, transport, and assembly of proteins. Probably involved in early steps of spliceosomal assembly. The polypeptide is Peptidyl-prolyl cis-trans isomerase CYP63 (CYP63) (Arabidopsis thaliana (Mouse-ear cress)).